We begin with the raw amino-acid sequence, 269 residues long: Hydroxyethylthiazole kinase (269 aa).

Residue Met-46 participates in substrate binding. Positions 122 and 168 each coordinate ATP. Gly-195 is a substrate binding site.

Belongs to the Thz kinase family. The cofactor is Mg(2+).

The catalysed reaction is 5-(2-hydroxyethyl)-4-methylthiazole + ATP = 4-methyl-5-(2-phosphooxyethyl)-thiazole + ADP + H(+). It functions in the pathway cofactor biosynthesis; thiamine diphosphate biosynthesis; 4-methyl-5-(2-phosphoethyl)-thiazole from 5-(2-hydroxyethyl)-4-methylthiazole: step 1/1. Functionally, catalyzes the phosphorylation of the hydroxyl group of 4-methyl-5-beta-hydroxyethylthiazole (THZ). In Geobacillus thermodenitrificans (strain NG80-2), this protein is Hydroxyethylthiazole kinase.